A 603-amino-acid chain; its full sequence is Phosphomethylpyrimidine synthase (603 aa).

Residues N224, M253, Y282, H318, 338-340 (SRG), 379-382 (DGLR), and E418 contribute to the substrate site. A Zn(2+)-binding site is contributed by H422. Y445 serves as a coordination point for substrate. H486 contributes to the Zn(2+) binding site. [4Fe-4S] cluster contacts are provided by C566, C569, and C574.

Belongs to the ThiC family. Homodimer. [4Fe-4S] cluster is required as a cofactor.

The catalysed reaction is 5-amino-1-(5-phospho-beta-D-ribosyl)imidazole + S-adenosyl-L-methionine = 4-amino-2-methyl-5-(phosphooxymethyl)pyrimidine + CO + 5'-deoxyadenosine + formate + L-methionine + 3 H(+). It functions in the pathway cofactor biosynthesis; thiamine diphosphate biosynthesis. Functionally, catalyzes the synthesis of the hydroxymethylpyrimidine phosphate (HMP-P) moiety of thiamine from aminoimidazole ribotide (AIR) in a radical S-adenosyl-L-methionine (SAM)-dependent reaction. The sequence is that of Phosphomethylpyrimidine synthase from Xylella fastidiosa (strain Temecula1 / ATCC 700964).